Reading from the N-terminus, the 23-residue chain is NADH-ubiquinone oxidoreductase 29 kDa subunit (23 aa).

Complex I is composed of about 45 different subunits.

It is found in the mitochondrion inner membrane. It catalyses the reaction a ubiquinone + NADH + 5 H(+)(in) = a ubiquinol + NAD(+) + 4 H(+)(out). Transfer of electrons from NADH to the respiratory chain. The immediate electron acceptor for the enzyme is believed to be ubiquinone. The polypeptide is NADH-ubiquinone oxidoreductase 29 kDa subunit (Solanum tuberosum (Potato)).